The following is a 95-amino-acid chain: Large ribosomal subunit protein bL25 (95 aa).

This sequence belongs to the bacterial ribosomal protein bL25 family. As to quaternary structure, part of the 50S ribosomal subunit; part of the 5S rRNA/L5/L18/L25 subcomplex. Contacts the 5S rRNA. Binds to the 5S rRNA independently of L5 and L18.

This is one of the proteins that binds to the 5S RNA in the ribosome where it forms part of the central protuberance. In Haemophilus ducreyi (strain 35000HP / ATCC 700724), this protein is Large ribosomal subunit protein bL25.